We begin with the raw amino-acid sequence, 191 residues long: MSPRIGLTQKMIVDAAAEIADQEGVNGVSLAALSKKMNVRPPSLYNHINGLQAIRAELAVRGLTKLFDQMADSVTERKGDSAMLSLAHAYVDFAIENPGYYEAALLKVHDKRTEIVSDQIVCLVTKLLIENGYASEKTAIHATRGLRSLLHGFTVLIAKEAFEREEDILESLSFSIRTFLSGLLINNKNIM.

The region spanning 6–66 is the HTH tetR-type domain; it reads GLTQKMIVDA…ELAVRGLTKL (61 aa). Positions 29 to 48 form a DNA-binding region, H-T-H motif; sequence SLAALSKKMNVRPPSLYNHI.

This is an uncharacterized protein from Bacillus subtilis (strain 168).